The sequence spans 178 residues: Interleukin-1 receptor antagonist protein (178 aa).

A signal peptide spans 1 to 26 (MEICRGPYSHLISLLLILLFRSESAG). Cys-92 and Cys-142 are joined by a disulfide. Asn-110 carries N-linked (GlcNAc...) asparagine glycosylation.

The protein belongs to the IL-1 family.

It localises to the secreted. Functionally, anti-inflammatory antagonist of interleukin-1 family of proinflammatory cytokines such as interleukin-1beta/IL1B and interleukin-1alpha/IL1A. Protects from immune dysregulation and uncontrolled systemic inflammation triggered by IL1 for a range of innate stimulatory agents such as pathogens. The protein is Interleukin-1 receptor antagonist protein (Il1rn) of Rattus norvegicus (Rat).